The sequence spans 336 residues: Nicotinate-nucleotide--dimethylbenzimidazole phosphoribosyltransferase (336 aa).

The Proton acceptor role is filled by glutamate 304.

This sequence belongs to the CobT family.

The catalysed reaction is 5,6-dimethylbenzimidazole + nicotinate beta-D-ribonucleotide = alpha-ribazole 5'-phosphate + nicotinate + H(+). Its pathway is nucleoside biosynthesis; alpha-ribazole biosynthesis; alpha-ribazole from 5,6-dimethylbenzimidazole: step 1/2. Functionally, catalyzes the synthesis of alpha-ribazole-5'-phosphate from nicotinate mononucleotide (NAMN) and 5,6-dimethylbenzimidazole (DMB). This chain is Nicotinate-nucleotide--dimethylbenzimidazole phosphoribosyltransferase, found in Ruegeria sp. (strain TM1040) (Silicibacter sp.).